A 491-amino-acid polypeptide reads, in one-letter code: Homeobox protein unplugged (491 aa).

Disordered stretches follow at residues 1 to 23, 46 to 69, 124 to 146, and 227 to 329; these read MERPALLQNGEHGAVGSLETKTT, SASASIAASPPSPPEDHEQEQEQE, AGKEPSHPHPPPPHALDKSPLPH, and FSPA…RRTA. A compositionally biased stretch (polar residues) spans 254-264; sequence GDSSSDISLTL. Residues 305–316 show a composition bias toward gly residues; sequence GLGGKDSQGNGS. Residues 323–382 constitute a DNA-binding region (homeobox); it reads SRRRRTAFTSEQLLELEREFHAKKYLSLTERSQIATSLKLSEVQVKIWFQNRRAKWKRVK.

The protein resides in the nucleus. Functionally, plays a regulatory role in neural branching of the tracheae: segment-specific aspects of these neural branching patterns appear to be generated by homeotic regulation of expression. This chain is Homeobox protein unplugged, found in Drosophila pseudoobscura pseudoobscura (Fruit fly).